The primary structure comprises 379 residues: Succinyl-diaminopimelate desuccinylase (379 aa).

Histidine 70 lines the Zn(2+) pocket. The active site involves aspartate 72. Position 103 (aspartate 103) interacts with Zn(2+). Glutamate 137 serves as the catalytic Proton acceptor. Residues glutamate 138, glutamate 166, and histidine 352 each contribute to the Zn(2+) site.

Belongs to the peptidase M20A family. DapE subfamily. In terms of assembly, homodimer. Requires Zn(2+) as cofactor. Co(2+) serves as cofactor.

It carries out the reaction N-succinyl-(2S,6S)-2,6-diaminopimelate + H2O = (2S,6S)-2,6-diaminopimelate + succinate. Its pathway is amino-acid biosynthesis; L-lysine biosynthesis via DAP pathway; LL-2,6-diaminopimelate from (S)-tetrahydrodipicolinate (succinylase route): step 3/3. Its function is as follows. Catalyzes the hydrolysis of N-succinyl-L,L-diaminopimelic acid (SDAP), forming succinate and LL-2,6-diaminopimelate (DAP), an intermediate involved in the bacterial biosynthesis of lysine and meso-diaminopimelic acid, an essential component of bacterial cell walls. This chain is Succinyl-diaminopimelate desuccinylase, found in Shewanella putrefaciens (strain CN-32 / ATCC BAA-453).